Here is a 491-residue protein sequence, read N- to C-terminus: Monothiol glutaredoxin-S11 (491 aa).

3 Glutaredoxin domains span residues 151-253, 287-389, and 394-491; these read NKRL…NIPL, KERL…GIVA, and EDRL…TLSE. Lysine 411 serves as a coordination point for glutathione. A [2Fe-2S] cluster-binding site is contributed by cysteine 419. Glutathione is bound by residues arginine 448, phenylalanine 460, and 473–474; that span reads CD.

It belongs to the glutaredoxin family. CGFS subfamily.

It is found in the cytoplasm. Functionally, may only reduce GSH-thiol disulfides, but not protein disulfides. The sequence is that of Monothiol glutaredoxin-S11 (GRXS11) from Oryza sativa subsp. japonica (Rice).